We begin with the raw amino-acid sequence, 58 residues long: Large ribosomal subunit protein bL32 (58 aa).

It belongs to the bacterial ribosomal protein bL32 family.

The polypeptide is Large ribosomal subunit protein bL32 (Staphylococcus aureus (strain NCTC 8325 / PS 47)).